Consider the following 389-residue polypeptide: Trans-2-enoyl-CoA reductase [NADH] (389 aa).

NAD(+)-binding positions include 47-52 (GASTGY), 73-74 (FE), 110-111 (DA), and 138-139 (LA). Tyrosine 224 serves as a coordination point for substrate. Tyrosine 234 serves as the catalytic Proton donor. NAD(+) contacts are provided by residues lysine 243 and 272–274 (LVT).

This sequence belongs to the TER reductase family. In terms of assembly, monomer.

It carries out the reaction a 2,3-saturated acyl-CoA + NAD(+) = a (2E)-enoyl-CoA + NADH + H(+). Its pathway is lipid metabolism; fatty acid biosynthesis. Its function is as follows. Involved in the fatty acid synthesis (FAS II). Catalyzes the reduction of a carbon-carbon double bond in an enoyl moiety that is covalently linked to a coenzyme A (CoA). The polypeptide is Trans-2-enoyl-CoA reductase [NADH] (Clostridium perfringens (strain ATCC 13124 / DSM 756 / JCM 1290 / NCIMB 6125 / NCTC 8237 / Type A)).